A 49-amino-acid chain; its full sequence is Putative metallothionein MT1DP (49 aa).

The tract at residues 1-29 (MDLSCSCATGGSCTCASSCKCKEYKCTSC) is beta. C5, C7, C13, C15, C19, C21, C26, C29, C33, C34, C36, C37, C41, C44, and C48 together coordinate a divalent metal cation. The alpha stretch occupies residues 30–49 (KKNCCSCCPMGCAKCAQGCT).

It belongs to the metallothionein superfamily. Type 1 family.

In terms of biological role, metallothioneins have a high content of cysteine residues that bind various heavy metals. The polypeptide is Putative metallothionein MT1DP (MT1DP) (Homo sapiens (Human)).